The following is an 876-amino-acid chain: MSRFFATGTDSESESSSEDEPVVRAPAPVYTFSDDEEETKRVVRSMKEKRYEELEGIIHSIRNHRKIKDFSSALASFEELQKAYTRAAPVVQKEENGVAPRFFIRALVELDDWVVGAWNEREARKALSKGNSKALTSLRQKLRKYTKDFEAEISXFREDPDLPDDNERKDSSSSDESEDEEKPIKEKPKPEPLLRPPPEDDESSDSMDWASSSSDSSFSSDDEERGTSNIREQFIKKVTKKEDDEEKIKLKLKKREERRERSGKINKRDVADDGGEWETVRKGAATSDKPKMFAKDSDIDAALVVKKLGEISAARGRKRTDRRAQLELLHELRTVALQHNLGDALQLKLRSAIVAALFDYNPKVSDAMKPEYWSKLVENIDHMVTLLLAHEDMVLSETILEENEQLVTPPYQVRGCLLTYLERLDDEFTKLLKECDPHSNEYVERLKDEVRVSALIDRVCQVVERDGTPQEICRAYLRKIDHLYYKFDPRAVRKDLPPTEETTIKKMERYCKYIYAHDETDRLRTRAILSHIYHHALHDNWFQARDLLLMSHLQETVQHSDPSTQILYNRTMANLGLCAFRRGNVKEAHGCLAELMMTGKPKELLAQGLLPQRQHERSKEQEKIEKQRQMPFHMHINLELLECVYLVSAMLIEIPYMAAHEFDARRRMISKTFYQNLRASERQALVGPPESMREHAVAAARAMRRGDWRACLNYIVNEKMNAKVWDLMVGADNVRAMLGRLIREESLRTYLFTYAHVYASLSLRSLADMFELPRQRVHSLVSKMIINEELLASLDDPSECAILHRSEPTRMQALALQLADKVGNLVDSNERIFEKQGSFFQRGGAQRGEGRQRERPREGWNRRTRNRRRDDERADD.

2 disordered regions span residues 1-25 (MSRF…VVRA) and 154-233 (SXFR…IREQ). The segment covering 11–20 (SESESSSEDE) has biased composition (acidic residues). Composition is skewed to basic and acidic residues over residues 154–172 (SXFR…KDSS) and 182–192 (KPIKEKPKPEP). Over residues 206–219 (SMDWASSSSDSSFS) the composition is skewed to low complexity. A PCI domain is found at 632 to 808 (FHMHINLELL…ECAILHRSEP (177 aa)). The disordered stretch occupies residues 839–876 (FFQRGGAQRGEGRQRERPREGWNRRTRNRRRDDERADD). Residues 848–861 (GEGRQRERPREGWN) show a composition bias toward basic and acidic residues.

Belongs to the eIF-3 subunit C family. Component of the eukaryotic translation initiation factor 3 (eIF-3) complex.

The protein resides in the cytoplasm. Component of the eukaryotic translation initiation factor 3 (eIF-3) complex, which is involved in protein synthesis of a specialized repertoire of mRNAs and, together with other initiation factors, stimulates binding of mRNA and methionyl-tRNAi to the 40S ribosome. The eIF-3 complex specifically targets and initiates translation of a subset of mRNAs involved in cell proliferation. This Bombyx mori (Silk moth) protein is Eukaryotic translation initiation factor 3 subunit C.